Reading from the N-terminus, the 739-residue chain is Phosphoribosylformylglycinamidine synthase subunit PurL (739 aa).

His-55 is a catalytic residue. ATP contacts are provided by Tyr-58 and Lys-97. Glu-99 lines the Mg(2+) pocket. Substrate contacts are provided by residues 100-103 and Arg-122; that span reads SHNH. Residue His-101 is the Proton acceptor of the active site. Mg(2+) is bound at residue Asp-123. Gln-246 lines the substrate pocket. Position 276 (Asp-276) interacts with Mg(2+). 320-322 contacts substrate; that stretch reads ESQ. ATP is bound by residues Asp-502 and Gly-539. Asn-540 is a binding site for Mg(2+). A substrate-binding site is contributed by Ser-542.

The protein belongs to the FGAMS family. Monomer. Part of the FGAM synthase complex composed of 1 PurL, 1 PurQ and 2 PurS subunits.

It localises to the cytoplasm. The catalysed reaction is N(2)-formyl-N(1)-(5-phospho-beta-D-ribosyl)glycinamide + L-glutamine + ATP + H2O = 2-formamido-N(1)-(5-O-phospho-beta-D-ribosyl)acetamidine + L-glutamate + ADP + phosphate + H(+). It functions in the pathway purine metabolism; IMP biosynthesis via de novo pathway; 5-amino-1-(5-phospho-D-ribosyl)imidazole from N(2)-formyl-N(1)-(5-phospho-D-ribosyl)glycinamide: step 1/2. Functionally, part of the phosphoribosylformylglycinamidine synthase complex involved in the purines biosynthetic pathway. Catalyzes the ATP-dependent conversion of formylglycinamide ribonucleotide (FGAR) and glutamine to yield formylglycinamidine ribonucleotide (FGAM) and glutamate. The FGAM synthase complex is composed of three subunits. PurQ produces an ammonia molecule by converting glutamine to glutamate. PurL transfers the ammonia molecule to FGAR to form FGAM in an ATP-dependent manner. PurS interacts with PurQ and PurL and is thought to assist in the transfer of the ammonia molecule from PurQ to PurL. The protein is Phosphoribosylformylglycinamidine synthase subunit PurL of Lactiplantibacillus plantarum (strain ATCC BAA-793 / NCIMB 8826 / WCFS1) (Lactobacillus plantarum).